A 98-amino-acid polypeptide reads, in one-letter code: MANFVLNATARNEDKQGKGASRRLRREALVPAIIYGGEAEPVAVTIELRELVKALENNAFFEEVVEVKVGDKVENVKIQALQRHPAKNTPMHADFKRA.

The interval 1-22 (MANFVLNATARNEDKQGKGASR) is disordered.

It belongs to the bacterial ribosomal protein bL25 family. In terms of assembly, part of the 50S ribosomal subunit; part of the 5S rRNA/L5/L18/L25 subcomplex. Contacts the 5S rRNA. Binds to the 5S rRNA independently of L5 and L18.

This is one of the proteins that binds to the 5S RNA in the ribosome where it forms part of the central protuberance. In Acinetobacter baylyi (strain ATCC 33305 / BD413 / ADP1), this protein is Large ribosomal subunit protein bL25.